A 452-amino-acid chain; its full sequence is Tol-Pal system protein TolB (452 aa).

An N-terminal signal peptide occupies residues 1–31; that stretch reads MCGVRRGMGVLLLFCAVALCAMPFVVRSVWG.

This sequence belongs to the TolB family. As to quaternary structure, the Tol-Pal system is composed of five core proteins: the inner membrane proteins TolA, TolQ and TolR, the periplasmic protein TolB and the outer membrane protein Pal. They form a network linking the inner and outer membranes and the peptidoglycan layer.

It is found in the periplasm. Part of the Tol-Pal system, which plays a role in outer membrane invagination during cell division and is important for maintaining outer membrane integrity. This Syntrophus aciditrophicus (strain SB) protein is Tol-Pal system protein TolB.